Reading from the N-terminus, the 274-residue chain is 4-deoxy-L-threo-5-hexosulose-uronate ketol-isomerase (274 aa).

Zn(2+)-binding residues include His192, His194, Glu199, and His241.

It belongs to the KduI family. Zn(2+) serves as cofactor.

It carries out the reaction 5-dehydro-4-deoxy-D-glucuronate = 3-deoxy-D-glycero-2,5-hexodiulosonate. It participates in glycan metabolism; pectin degradation; 2-dehydro-3-deoxy-D-gluconate from pectin: step 4/5. Catalyzes the isomerization of 5-dehydro-4-deoxy-D-glucuronate to 3-deoxy-D-glycero-2,5-hexodiulosonate. The protein is 4-deoxy-L-threo-5-hexosulose-uronate ketol-isomerase of Cereibacter sphaeroides (strain ATCC 17025 / ATH 2.4.3) (Rhodobacter sphaeroides).